The following is a 392-amino-acid chain: Alkaline phosphatase L (392 aa).

An N-terminal signal peptide occupies residues 1 to 23 (MYKRSLIAASLSVAALVSAQAMA).

The protein belongs to the PstS family. As to quaternary structure, homodimer.

The protein localises to the secreted. It is found in the periplasm. The enzyme catalyses a phosphate monoester + H2O = an alcohol + phosphate. In terms of biological role, has both a phosphomonoesterase and phosphodiesterase activity. This chain is Alkaline phosphatase L, found in Pseudomonas aeruginosa.